We begin with the raw amino-acid sequence, 927 residues long: MHQQPRGPARVSSPGATTQPNLPSRSNSTREAALGSRPRAGSNLVGRDVPNSPSLESPPIPAPPADSVRKLDQIIQNFYAKAAVLVLDSRIKSRPARGANGARKPNKWFQIETDEIDDFRDELKIWKNCGSLDNRPPPMVIEVYLDASRLKDSQSLVIVDENGKRWDVMEQLNSYGSSTDSSGASRRNNEVVIERWQVELKHSGMTSVDFGPILPTVYKKAIVFFRSLFITTRLLPAWKFASQGAAKNSHPALIPRCRIRLSQPDRPRYDQLRLPIDGRPDPVTEYVFGDLEVPVGRLSTLVTYRSDCNFRVDDSEALLSSRFMGVDENFFRPSLPQQHATSRAPAAEAGSLRDHRSKPNLNDIQQAYGSLSTFHGNVPIGTSPISALRSVRQPGSDTSSPPESIPAQHDVGGPSSLPVRQGTARPHLPALEGLGRRPSVSFQPFKAGSLSGSPVPRQLDAEPASPQSLTRPGIPSLRQAGNRTSLTAGMPASLRGGPPTSSGETAVAGSPRPASTSRYSSSFTHRRGRLSFGGASKAGDDEQGSSGRQSLASSVAQPGSGLLAEVAGTSSESLRDDNEQLEDFIKALDSKKTLQSFGPSKTGESATNKTVAQLSRFHMMRDSNNALTESMTSSVQMQRSSSSSSRQLTSVPGMTAPASVSASSSPGKPLSPHTPHTPAIPSRLSENSIIDYSGQGRITSRQGRTSDNTQPGTIRENTITQDGTTAIDIPLSPRLATYQRRASSVAIQNRSMADDDDTDSAFAHRSISLGADDREPPTLSILLGRQMQLEEDSTQRPSDRLEPAADTGSTETPDMLRQGLSEENPPEGLIPAATSSSPFGRRRYMGMASHKQTPPQSSRGSFNGSLNRQVRGDDDSVNEEPLVFDLSEMDPQGRRSIEEARSGASGGPNIGPDRGGYESRNASRRGW.

Disordered regions lie at residues 1 to 66 (MHQQ…PPAD), 334 to 359 (SLPQ…RSKP), 388 to 559 (LRSV…AQPG), 628 to 716 (TESM…TIRE), and 786 to 927 (QMQL…RRGW). A compositionally biased stretch (polar residues) spans 14-30 (PGATTQPNLPSRSNSTR). Composition is skewed to polar residues over residues 393-402 (QPGSDTSSPP), 513-523 (PASTSRYSSSF), and 544-557 (GSSG…SVAQ). Low complexity predominate over residues 630–671 (SMTSSVQMQRSSSSSSRQLTSVPGMTAPASVSASSSPGKPLS). Residues 684–716 (LSENSIIDYSGQGRITSRQGRTSDNTQPGTIRE) show a composition bias toward polar residues. The segment covering 793–803 (STQRPSDRLEP) has biased composition (basic and acidic residues). Positions 850–868 (HKQTPPQSSRGSFNGSLNR) are enriched in polar residues. Over residues 891-901 (PQGRRSIEEAR) the composition is skewed to basic and acidic residues.

This sequence belongs to the ATG13 family. Fungi subfamily. In terms of assembly, hypophosphorylated form interacts with ATG1 to form the ATG1-ATG13 kinase complex. The ATG1-ATG13 complex interacts with the ATG17-ATG29-ATG31 complex through direct interaction with ATG17.

Its subcellular location is the cytoplasm. The protein resides in the preautophagosomal structure. Functionally, activates the ATG1 kinase in a nutritional condition dependent manner through the TOR pathway, leading to autophagy. Involved in ATG9 and ATG23 cycling through the pre-autophagosomal structure. Also involved in cytoplasm to vacuole transport (Cvt) and more specifically in Cvt vesicle formation. Seems to play a role in the switching machinery regulating the conversion between the Cvt pathway and autophagy. Finally, ATG13 is also required for glycogen storage during stationary phase. Autophagy is required for proper vegetative growth, asexual/sexual reproduction, and full virulence. Autophagy is particularly involved in the biosynthesis of deoxynivalenol (DON), an important virulence determinant. The polypeptide is Autophagy-related protein 13 (Gibberella zeae (strain ATCC MYA-4620 / CBS 123657 / FGSC 9075 / NRRL 31084 / PH-1) (Wheat head blight fungus)).